A 481-amino-acid polypeptide reads, in one-letter code: ATP synthase subunit beta, chloroplastic (481 aa).

162-169 (GGAGVGKT) contributes to the ATP binding site.

The protein belongs to the ATPase alpha/beta chains family. As to quaternary structure, F-type ATPases have 2 components, CF(1) - the catalytic core - and CF(0) - the membrane proton channel. CF(1) has five subunits: alpha(3), beta(3), gamma(1), delta(1), epsilon(1). CF(0) has four main subunits: a(1), b(1), b'(1) and c(9-12).

It localises to the plastid. The protein resides in the chloroplast thylakoid membrane. It carries out the reaction ATP + H2O + 4 H(+)(in) = ADP + phosphate + 5 H(+)(out). In terms of biological role, produces ATP from ADP in the presence of a proton gradient across the membrane. The catalytic sites are hosted primarily by the beta subunits. This chain is ATP synthase subunit beta, chloroplastic, found in Oltmannsiellopsis viridis (Marine flagellate).